We begin with the raw amino-acid sequence, 156 residues long: 6,7-dimethyl-8-ribityllumazine synthase (156 aa).

5-amino-6-(D-ribitylamino)uracil is bound by residues phenylalanine 22, 56 to 58, and 80 to 82; these read AME and AVI. Position 85 to 86 (85 to 86) interacts with (2S)-2-hydroxy-3-oxobutyl phosphate; the sequence is ET. The active-site Proton donor is the histidine 88. Phenylalanine 113 is a binding site for 5-amino-6-(D-ribitylamino)uracil. Arginine 127 serves as a coordination point for (2S)-2-hydroxy-3-oxobutyl phosphate.

The protein belongs to the DMRL synthase family.

The catalysed reaction is (2S)-2-hydroxy-3-oxobutyl phosphate + 5-amino-6-(D-ribitylamino)uracil = 6,7-dimethyl-8-(1-D-ribityl)lumazine + phosphate + 2 H2O + H(+). It participates in cofactor biosynthesis; riboflavin biosynthesis; riboflavin from 2-hydroxy-3-oxobutyl phosphate and 5-amino-6-(D-ribitylamino)uracil: step 1/2. Catalyzes the formation of 6,7-dimethyl-8-ribityllumazine by condensation of 5-amino-6-(D-ribitylamino)uracil with 3,4-dihydroxy-2-butanone 4-phosphate. This is the penultimate step in the biosynthesis of riboflavin. This chain is 6,7-dimethyl-8-ribityllumazine synthase, found in Kosmotoga olearia (strain ATCC BAA-1733 / DSM 21960 / TBF 19.5.1).